The chain runs to 328 residues: P2Y purinoceptor 6 (328 aa).

Topologically, residues 1–27 (MERDNGTIQAPGLPPTTCVYREDFKRL) are extracellular. N-linked (GlcNAc...) asparagine glycosylation is present at Asn-5. A helical membrane pass occupies residues 28–48 (LLPPVYSVVLVVGLPLNVCVI). At 49-62 (AQICASRRTLTRSA) the chain is on the cytoplasmic side. Residues 63-83 (VYTLNLALADLLYACSLPLLI) form a helical membrane-spanning segment. Residues 84–101 (YNYARGDHWPFGDLACRL) lie on the Extracellular side of the membrane. The cysteines at positions 99 and 177 are disulfide-linked. The helical transmembrane segment at 102–122 (VRFLFYANLHGSILFLTCISF) threads the bilayer. Residues 123-144 (QRYLGICHPLAPWHKRGGRRAA) are Cytoplasmic-facing. The chain crosses the membrane as a helical span at residues 145 to 165 (WVVCGVVWLVVTAQCLPTAVF). At 166–194 (AATGIQRNRTVCYDLSPPILSTRYLPYGM) the chain is on the extracellular side. The N-linked (GlcNAc...) asparagine glycan is linked to Asn-173. Residues 195–215 (ALTVIGFLLPFTALLACYCRM) form a helical membrane-spanning segment. Residues 216–236 (ARRLCRQDGPAGPVAQERRSK) are Cytoplasmic-facing. A helical membrane pass occupies residues 237-257 (AARMAVVVAAVFVISFLPFHI). The Extracellular segment spans residues 258–280 (TKTAYLAVRSTPGVSCPVLETFA). The chain crosses the membrane as a helical span at residues 281–303 (AAYKGTRPFASANSVLDPILFYF). The Cytoplasmic segment spans residues 304-328 (TQQKFRRQPHDLLQKLTAKWQRQRV).

It belongs to the G-protein coupled receptor 1 family. In terms of tissue distribution, abundantly expressed in various tissues including lung, stomach, intestine, spleen, mesentery, heart, and, most prominently, aorta.

It is found in the cell membrane. Receptor for extracellular UTP &gt; ADP = 2-methylthio-ATP &gt; ADP-beta-S &gt; ATP = ATP-gamma-S. The activity of this receptor is mediated by G proteins which activate a phosphatidylinositol-calcium second messenger system. Functionally coupled to phospholipase C. The polypeptide is P2Y purinoceptor 6 (P2ry6) (Rattus norvegicus (Rat)).